We begin with the raw amino-acid sequence, 1410 residues long: ABC transporter C family member 13 (1410 aa).

8 consecutive transmembrane segments (helical) span residues 23 to 43 (IVLG…LTIT), 60 to 80 (LLYV…VLLV), 88 to 108 (VILC…ILSL), 122 to 142 (ILCF…NMIF), 148 to 168 (QEIC…VLRI), 391 to 411 (LSGL…SVLI), 474 to 494 (VFFW…LFAL), and 505 to 525 (FTCL…PWVI). Residues 255 to 530 (CNNYSTPSLI…FPWVINGLID (276 aa)) form the ABC transmembrane type-1 1 domain. The region spanning 564–791 (VCVEDASCTW…ISPTFSLTNE (228 aa)) is the ABC transporter 1 domain. 602-609 (GEVGSGKT) is a binding site for ATP. 6 helical membrane-spanning segments follow: residues 844–864 (AVFS…LMQG), 889–909 (TSFY…LTLV), 963–985 (SLPF…IVVL), 990–1009 (VLFL…LQVF), 1087–1107 (IVLF…PISF), and 1111–1131 (GLVG…GSLL). An ABC transmembrane type-1 2 domain is found at 852–1139 (TIVILVSAVL…LLTSFTETEK (288 aa)). Residues 1174–1407 (VEFHNVTMRY…DSSTFSSFVR (234 aa)) form the ABC transporter 2 domain. 1208–1215 (GRTGAGKS) lines the ATP pocket.

This sequence belongs to the ABC transporter superfamily. ABCC family. Conjugate transporter (TC 3.A.1.208) subfamily. Ubiquitous.

The protein localises to the membrane. The catalysed reaction is ATP + H2O + xenobioticSide 1 = ADP + phosphate + xenobioticSide 2.. Functionally, pump for glutathione S-conjugates. The polypeptide is ABC transporter C family member 13 (ABCC13) (Arabidopsis thaliana (Mouse-ear cress)).